The primary structure comprises 759 residues: Protein YdeP (759 aa).

The [4Fe-4S] cluster site is built by Cys-49 and Cys-52.

This sequence belongs to the prokaryotic molybdopterin-containing oxidoreductase family. Requires [4Fe-4S] cluster as cofactor. Mo-bis(molybdopterin guanine dinucleotide) is required as a cofactor.

Functionally, probably involved in acid resistance. This chain is Protein YdeP (ydeP), found in Shigella flexneri.